The primary structure comprises 384 residues: Dimethyladenosine transferase (384 aa).

Residues 1–24 (MPKTAKNKRNNAASGPYDKKSKGS) are disordered. S-adenosyl-L-methionine contacts are provided by histidine 39, leucine 41, glycine 66, glutamate 87, aspartate 115, and asparagine 131. Residues 289 to 309 (MDANSDTDNDNDGDAMEEDDD) are disordered.

Belongs to the class I-like SAM-binding methyltransferase superfamily. rRNA adenine N(6)-methyltransferase family.

It localises to the cytoplasm. It is found in the nucleus. The protein resides in the nucleolus. The catalysed reaction is adenosine(1779)/adenosine(1780) in 18S rRNA + 4 S-adenosyl-L-methionine = N(6)-dimethyladenosine(1779)/N(6)-dimethyladenosine(1780) in 18S rRNA + 4 S-adenosyl-L-homocysteine + 4 H(+). Its function is as follows. Specifically dimethylates two adjacent adenosines in the loop of a conserved hairpin near the 3'-end of 18S rRNA in the 40S particle. This is Dimethyladenosine transferase (DIM1) from Chaetomium thermophilum (strain DSM 1495 / CBS 144.50 / IMI 039719) (Thermochaetoides thermophila).